Consider the following 347-residue polypeptide: Protein pelota homolog (347 aa).

Belongs to the eukaryotic release factor 1 family. Pelota subfamily. Monomer. The cofactor is a divalent metal cation.

The protein localises to the cytoplasm. Functionally, may function in recognizing stalled ribosomes, interact with stem-loop structures in stalled mRNA molecules, and effect endonucleolytic cleavage of the mRNA. May play a role in the release non-functional ribosomes and degradation of damaged mRNAs. Has endoribonuclease activity. The polypeptide is Protein pelota homolog (Methanocaldococcus jannaschii (strain ATCC 43067 / DSM 2661 / JAL-1 / JCM 10045 / NBRC 100440) (Methanococcus jannaschii)).